The chain runs to 253 residues: Tryptophan synthase alpha chain (253 aa).

Active-site proton acceptor residues include Glu-47 and Asp-58.

It belongs to the TrpA family. As to quaternary structure, tetramer of two alpha and two beta chains.

It carries out the reaction (1S,2R)-1-C-(indol-3-yl)glycerol 3-phosphate + L-serine = D-glyceraldehyde 3-phosphate + L-tryptophan + H2O. It functions in the pathway amino-acid biosynthesis; L-tryptophan biosynthesis; L-tryptophan from chorismate: step 5/5. The alpha subunit is responsible for the aldol cleavage of indoleglycerol phosphate to indole and glyceraldehyde 3-phosphate. This Syntrophotalea carbinolica (strain DSM 2380 / NBRC 103641 / GraBd1) (Pelobacter carbinolicus) protein is Tryptophan synthase alpha chain.